Reading from the N-terminus, the 663-residue chain is UvrABC system protein B (663 aa).

Residues 26-414 form the Helicase ATP-binding domain; it reads DGLESGLAKQ…DNVAEQVVRP (389 aa). 39–46 serves as a coordination point for ATP; it reads GVTGSGKT. Positions 92 to 115 match the Beta-hairpin motif; that stretch reads YYDYYQPEAYVPASDTFIEKDASI. A Helicase C-terminal domain is found at 430–596; it reads QVDDLMSEIR…GINKSVEDIL (167 aa). The UVR domain maps to 624–659; it reads AKEINALEKQMYAHAQNMEFELAAKIRDEYLLLKEQ.

It belongs to the UvrB family. In terms of assembly, forms a heterotetramer with UvrA during the search for lesions. Interacts with UvrC in an incision complex.

It is found in the cytoplasm. The UvrABC repair system catalyzes the recognition and processing of DNA lesions. A damage recognition complex composed of 2 UvrA and 2 UvrB subunits scans DNA for abnormalities. Upon binding of the UvrA(2)B(2) complex to a putative damaged site, the DNA wraps around one UvrB monomer. DNA wrap is dependent on ATP binding by UvrB and probably causes local melting of the DNA helix, facilitating insertion of UvrB beta-hairpin between the DNA strands. Then UvrB probes one DNA strand for the presence of a lesion. If a lesion is found the UvrA subunits dissociate and the UvrB-DNA preincision complex is formed. This complex is subsequently bound by UvrC and the second UvrB is released. If no lesion is found, the DNA wraps around the other UvrB subunit that will check the other stand for damage. The sequence is that of UvrABC system protein B from Legionella pneumophila (strain Paris).